Reading from the N-terminus, the 89-residue chain is Small ribosomal subunit protein uS15 (89 aa).

It belongs to the universal ribosomal protein uS15 family. As to quaternary structure, part of the 30S ribosomal subunit. Forms a bridge to the 50S subunit in the 70S ribosome, contacting the 23S rRNA.

Its function is as follows. One of the primary rRNA binding proteins, it binds directly to 16S rRNA where it helps nucleate assembly of the platform of the 30S subunit by binding and bridging several RNA helices of the 16S rRNA. Functionally, forms an intersubunit bridge (bridge B4) with the 23S rRNA of the 50S subunit in the ribosome. The chain is Small ribosomal subunit protein uS15 from Rhizobium leguminosarum bv. trifolii (strain WSM2304).